The sequence spans 65 residues: Gallinacin-1 alpha (65 aa).

The N-terminal stretch at 1–19 is a signal peptide; the sequence is MRIVYLLLPFILLLAQGAA. Residues 20 to 25 constitute a propeptide that is removed on maturation; it reads GSSQAL. Cystine bridges form between C31–C59, C38–C53, and C43–C60.

Belongs to the beta-defensin family.

The protein localises to the secreted. The protein resides in the cytoplasmic granule. Has bactericidal activity. Potent activity against E.coli ML-35, L.monocytogenes EGD and C.albicans. This is Gallinacin-1 alpha from Gallus gallus (Chicken).